A 657-amino-acid chain; its full sequence is Translation factor GUF1, mitochondrial (657 aa).

A mitochondrion-targeting transit peptide spans 1-39 (MRGCLQSVKWLTSAVRQSQSLTSSTRFPRRLFNTSTLHY). One can recognise a tr-type G domain in the interval 59–239 (ERFRNFCIVA…TVIEQVPAPV (181 aa)). Residues 68 to 75 (AHVDHGKS), 132 to 136 (DTPGH), and 186 to 189 (NKVD) contribute to the GTP site.

The protein belongs to the TRAFAC class translation factor GTPase superfamily. Classic translation factor GTPase family. LepA subfamily.

It localises to the mitochondrion inner membrane. The catalysed reaction is GTP + H2O = GDP + phosphate + H(+). Promotes mitochondrial protein synthesis. May act as a fidelity factor of the translation reaction, by catalyzing a one-codon backward translocation of tRNAs on improperly translocated ribosomes. Binds to mitochondrial ribosomes in a GTP-dependent manner. This is Translation factor GUF1, mitochondrial from Blastomyces gilchristii (strain SLH14081) (Blastomyces dermatitidis).